Reading from the N-terminus, the 65-residue chain is Cell death protein rpr (65 aa).

Interacts with Diap2 (via BIR2 domain).

Functionally, activator of apoptosis, as well as grim and hid, that acts on the effector Dredd. The chain is Cell death protein rpr (rpr) from Drosophila melanogaster (Fruit fly).